The primary structure comprises 149 residues: Pleckstrin homology domain-containing family J member 1 (149 aa).

The PH domain maps to 15 to 108 (PAEKAAEILM…WIEALKRASY (94 aa)).

This is Pleckstrin homology domain-containing family J member 1 (PLEKHJ1) from Gallus gallus (Chicken).